Reading from the N-terminus, the 274-residue chain is Undecaprenyl-diphosphatase 1 (274 aa).

7 helical membrane passes run 8-28 (WLLIKYLLLGLFQGFTEPIPV), 45-65 (IEGLSFEVMVNFASLFAVIAI), 92-112 (FRISFYLLLATVPAVLAALLF), 120-140 (LKQLHVIAFALLITGMALWLI), 195-215 (FSFFLYIPISLGSGVLAISDI), 230-250 (IAFIGSFIASYVSLLWFMNIM), and 253-273 (GKLIYFALYCWLAGLIVLSLL).

Belongs to the UppP family.

The protein resides in the cell membrane. The catalysed reaction is di-trans,octa-cis-undecaprenyl diphosphate + H2O = di-trans,octa-cis-undecaprenyl phosphate + phosphate + H(+). In terms of biological role, catalyzes the dephosphorylation of undecaprenyl diphosphate (UPP). Confers resistance to bacitracin. The protein is Undecaprenyl-diphosphatase 1 of Halalkalibacterium halodurans (strain ATCC BAA-125 / DSM 18197 / FERM 7344 / JCM 9153 / C-125) (Bacillus halodurans).